The following is a 1314-amino-acid chain: Angiotensin-converting enzyme (1314 aa).

An N-terminal signal peptide occupies residues 1 to 35 (MGAASGQRGQGPPSPLLLLWLSLLLLLLPPSPAPA). At 36 to 1265 (LDPGLQPGNF…LEPQQARVGQ (1230 aa)) the chain is on the extracellular side. 5 N-linked (GlcNAc...) asparagine glycosylation sites follow: N44, N60, N80, N117, and N166. 2 Peptidase M2 domains span residues 46 to 630 (SADE…LGWP) and 649 to 1228 (VTDE…LGWP). C163 and C171 are oxidised to a cystine. Residue Y237 participates in chloride binding. N-linked (GlcNAc...) asparagine glycosylation is present at N324. C365 and C383 are joined by a disulfide. H396 contacts Zn(2+). The active-site Proton acceptor 1 is E397. Zn(2+) contacts are provided by H400 and E424. N-linked (GlcNAc...) asparagine glycosylation occurs at N515. Residue H526 is the Proton donor 1 of the active site. R535 is a binding site for chloride. C551 and C563 are disulfide-bonded. 4 N-linked (GlcNAc...) asparagine glycosylation sites follow: N683, N701, N720, and N766. C763 and C769 are disulfide-bonded. Chloride contacts are provided by R797 and Y835. An N-linked (GlcNAc...) asparagine glycan is attached at N948. An intrachain disulfide couples C963 to C981. Residue H994 participates in Zn(2+) binding. The Proton acceptor 2 role is filled by E995. Positions 998 and 1022 each coordinate Zn(2+). Chloride contacts are provided by W1096 and R1100. Catalysis depends on H1124, which acts as the Proton donor 2. R1133 is a chloride binding site. A disulfide bridge connects residues C1149 and C1161. The N-linked (GlcNAc...) asparagine glycan is linked to N1197. A juxtamembrane stalk region spans residues 1221–1262 (HGETLGWPEYNWTPNTARSEGPFPESGRVNFLGMYLEPQQAR). The chain crosses the membrane as a helical span at residues 1266 to 1282 (WVLLFLGVSLLVATLGL). Over 1283-1314 (THRLFSIRQHGHSLHRPHRGPQFGSEVELRHS) the chain is Cytoplasmic. Residues 1293-1314 (GHSLHRPHRGPQFGSEVELRHS) are disordered. Position 1307 is a phosphoserine (S1307).

This sequence belongs to the peptidase M2 family. As to quaternary structure, monomer and homodimer; homodimerizes following binding to an inhibitor. Interacts with calmodulin (CALM1, CALM2 or CALM3); interaction takes place in the cytoplasmic region and regulates phosphorylation and proteolytic cleavage. It depends on Zn(2+) as a cofactor. Chloride serves as cofactor. Produced following proteolytic cleavage by secretase enzymes that cleave the transmembrane form in the juxtamembrane stalk region upstream of the transmembrane region. Cleavage can take place at different sites of the juxtamembrane stalk region. In terms of processing, phosphorylated by CK2 on Ser-1307; which allows membrane retention. Phosphorylated on tyrosine residues on its extracellular part, promoting cleavage by secretase enzymes and formation of the soluble form (Angiotensin-converting enzyme, soluble form). As to expression, widely expressed with dominant expression in lung and kidney.

Its subcellular location is the cell membrane. The protein localises to the cytoplasm. It localises to the secreted. The catalysed reaction is Release of a C-terminal dipeptide, oligopeptide-|-Xaa-Yaa, when Xaa is not Pro, and Yaa is neither Asp nor Glu. Thus, conversion of angiotensin I to angiotensin II, with increase in vasoconstrictor activity, but no action on angiotensin II.. The enzyme catalyses angiotensin I + H2O = L-histidyl-L-leucine + angiotensin II. It carries out the reaction bradykinin + H2O = L-Phe-L-Arg + bradykinin(1-7). It catalyses the reaction substance P + H2O = substance P(1-9) + L-Leu-L-Met-NH2. The catalysed reaction is substance P + H2O = substance P(1-8) + Gly-L-Leu-L-Met-NH2. The enzyme catalyses substance P + H2O = L-Phe-L-Phe-Gly-L-Leu-L-Met-NH2 + substance P(1-6). It carries out the reaction neurotensin + H2O = neurotensin(1-11) + L-isoleucyl-L-leucine. It catalyses the reaction goralatide + H2O = N-acetyl-L-seryl-L-aspartate + L-lysyl-L-proline. The catalysed reaction is Met-enkephalin + H2O = L-phenylalanyl-L-methionine + L-tyrosylglycylglycine. The enzyme catalyses Leu-enkephalin + H2O = L-tyrosylglycylglycine + L-phenylalanyl-L-leucine. It carries out the reaction Met-enkephalin-Arg-Phe + H2O = L-arginyl-L-phenylalanine + Met-enkephalin. The dipeptidyl carboxypeptidase activity is strongly activated by chloride. The dipeptidyl carboxypeptidase activity is specifically inhibited by lisinopril, captopril and enalaprilat. Its activity is regulated as follows. Strongly inhibited by lisinopril and captopril. In terms of biological role, dipeptidyl carboxypeptidase that removes dipeptides from the C-terminus of a variety of circulating hormones, such as angiotensin I, bradykinin or enkephalins, thereby playing a key role in the regulation of blood pressure, electrolyte homeostasis or synaptic plasticity. Composed of two similar catalytic domains, each possessing a functional active site, with different selectivity for substrates. Plays a major role in the angiotensin-renin system that regulates blood pressure and sodium retention by the kidney by converting angiotensin I to angiotensin II, resulting in an increase of the vasoconstrictor activity of angiotensin. Also able to inactivate bradykinin, a potent vasodilator, and therefore enhance the blood pressure response. Acts as a regulator of synaptic transmission by mediating cleavage of neuropeptide hormones, such as substance P, neurotensin or enkephalins. Catalyzes degradation of different enkephalin neuropeptides (Met-enkephalin, Leu-enkephalin, Met-enkephalin-Arg-Phe and possibly Met-enkephalin-Arg-Gly-Leu). Acts as a regulator of synaptic plasticity in the nucleus accumbens of the brain by mediating cleavage of Met-enkephalin-Arg-Phe, a strong ligand of Mu-type opioid receptor OPRM1, into Met-enkephalin. Met-enkephalin-Arg-Phe cleavage by ACE decreases activation of OPRM1, leading to long-term synaptic potentiation of glutamate release. Also acts as a regulator of hematopoietic stem cell differentiation by mediating degradation of hemoregulatory peptide N-acetyl-SDKP (AcSDKP). Acts as a regulator of cannabinoid signaling pathway by mediating degradation of hemopressin, an antagonist peptide of the cannabinoid receptor CNR1. Involved in amyloid-beta metabolism by catalyzing degradation of Amyloid-beta protein 40 and Amyloid-beta protein 42 peptides, thereby preventing plaque formation. Catalyzes cleavage of cholecystokinin (maturation of Cholecystokinin-8 and Cholecystokinin-5) and Gonadoliberin-1 (both maturation and degradation) hormones. Degradation of hemoregulatory peptide N-acetyl-SDKP (AcSDKP) and amyloid-beta proteins is mediated by the N-terminal catalytic domain, while angiotensin I and cholecystokinin cleavage is mediated by the C-terminal catalytic region. Functionally, soluble form that is released in blood plasma and other body fluids following proteolytic cleavage in the juxtamembrane stalk region. Isoform produced by alternative promoter usage that is specifically expressed in spermatocytes and adult testis, and which is required for male fertility. In contrast to somatic isoforms, only contains one catalytic domain. Acts as a dipeptidyl carboxypeptidase that removes dipeptides from the C-terminus of substrates. The identity of substrates that are needed for male fertility is unknown. May also have a glycosidase activity which releases GPI-anchored proteins from the membrane by cleaving the mannose linkage in the GPI moiety. The GPIase activity was reported to be essential for the egg-binding ability of the sperm. This activity is however unclear and has been challenged by other groups, suggesting that it may be indirect. This is Angiotensin-converting enzyme from Mesocricetus auratus (Golden hamster).